Reading from the N-terminus, the 413-residue chain is Putative competence-damage inducible protein (413 aa).

The protein belongs to the CinA family.

This chain is Putative competence-damage inducible protein, found in Thermoanaerobacter pseudethanolicus (strain ATCC 33223 / 39E) (Clostridium thermohydrosulfuricum).